Reading from the N-terminus, the 809-residue chain is Penicillin-binding protein 1A (809 aa).

At 1 to 34 (MSDNTKTNSRNKSVKRTKKVKKKKKFGFFKKLFT) the chain is on the cytoplasmic side. The helical; Signal-anchor for type II membrane protein transmembrane segment at 35-55 (ILFCLFILLSVAASGVIFAIV) threads the bilayer. Residues 56-809 (KTSPNLDING…PNNNTTNTNK (754 aa)) are Extracellular-facing. Residues 74–251 (SQLYDDNNNP…PSAYYPFSQN (178 aa)) form a transglycosylase region. Glutamate 113 (proton donor; for transglycosylase activity) is an active-site residue. Residues 381 to 664 (AAATLFDYHT…VAEIWGEIMK (284 aa)) form a transpeptidase region. The active-site Acyl-ester intermediate; for transpeptidase activity is the serine 422. Residues 694–809 (SPSNLSGDDS…PNNNTTNTNK (116 aa)) form a disordered region.

The protein in the N-terminal section; belongs to the glycosyltransferase 51 family. In the C-terminal section; belongs to the transpeptidase family.

The protein localises to the cell membrane. The catalysed reaction is [GlcNAc-(1-&gt;4)-Mur2Ac(oyl-L-Ala-gamma-D-Glu-L-Lys-D-Ala-D-Ala)](n)-di-trans,octa-cis-undecaprenyl diphosphate + beta-D-GlcNAc-(1-&gt;4)-Mur2Ac(oyl-L-Ala-gamma-D-Glu-L-Lys-D-Ala-D-Ala)-di-trans,octa-cis-undecaprenyl diphosphate = [GlcNAc-(1-&gt;4)-Mur2Ac(oyl-L-Ala-gamma-D-Glu-L-Lys-D-Ala-D-Ala)](n+1)-di-trans,octa-cis-undecaprenyl diphosphate + di-trans,octa-cis-undecaprenyl diphosphate + H(+). It catalyses the reaction Preferential cleavage: (Ac)2-L-Lys-D-Ala-|-D-Ala. Also transpeptidation of peptidyl-alanyl moieties that are N-acyl substituents of D-alanine.. Its pathway is cell wall biogenesis; peptidoglycan biosynthesis. Functionally, cell wall formation. Synthesis of cross-linked peptidoglycan from the lipid intermediates. The enzyme has a penicillin-insensitive transglycosylase N-terminal domain (formation of linear glycan strands) and a penicillin-sensitive transpeptidase C-terminal domain (cross-linking of the peptide subunits). This chain is Penicillin-binding protein 1A (pbpA), found in Clostridium acetobutylicum (strain ATCC 824 / DSM 792 / JCM 1419 / IAM 19013 / LMG 5710 / NBRC 13948 / NRRL B-527 / VKM B-1787 / 2291 / W).